Consider the following 465-residue polypeptide: UDP-glucose:undecaprenyl-phosphate glucose-1-phosphate transferase (465 aa).

5 consecutive transmembrane segments (helical) span residues 23–43 (FSDILIIFLGIYFSCFINDYF), 46–66 (LHYVLMALVALVVFQMIGGIT), 82–102 (ILILKNWSLSFLLTLGFVTLF), 105–125 (FDLTFRTFIFWYLAVCAGFVV), and 280–300 (IIVSSLILILISPILLVIATA).

Belongs to the bacterial sugar transferase family.

It localises to the cell inner membrane. It carries out the reaction di-trans,octa-cis-undecaprenyl phosphate + UDP-alpha-D-glucose = alpha-D-glucosyl di-trans,octa-cis-undecaprenyl diphosphate + UMP. The protein operates within capsule biogenesis; capsule polysaccharide biosynthesis. Functionally, is likely the initiating enzyme for the K2 capsular polysaccharide synthesis. Catalyzes the transfer of the glucose-1-phosphate moiety from UDP-Glc onto the carrier lipid undecaprenyl phosphate (C55-P), forming a phosphoanhydride bond yielding to glucosyl-pyrophosphoryl-undecaprenol (Glc-PP-C55). The sequence is that of UDP-glucose:undecaprenyl-phosphate glucose-1-phosphate transferase from Klebsiella pneumoniae.